Reading from the N-terminus, the 328-residue chain is Malate dehydrogenase (328 aa).

12–18 contributes to the NAD(+) binding site; sequence GAAGQIA. Substrate contacts are provided by Arg-93 and Arg-99. NAD(+) contacts are provided by residues Asn-106, Gln-113, and 130 to 132; that span reads VGN. Asn-132 and Arg-163 together coordinate substrate. The active-site Proton acceptor is the His-188.

The protein belongs to the LDH/MDH superfamily. MDH type 2 family.

The enzyme catalyses (S)-malate + NAD(+) = oxaloacetate + NADH + H(+). Catalyzes the reversible oxidation of malate to oxaloacetate. In Burkholderia ambifaria (strain ATCC BAA-244 / DSM 16087 / CCUG 44356 / LMG 19182 / AMMD) (Burkholderia cepacia (strain AMMD)), this protein is Malate dehydrogenase.